The chain runs to 479 residues: Probable periplasmic serine endoprotease DegP-like (479 aa).

Residues 1–27 (MSIPRLKSYLSMFAAVLMLGQVLSAQA) form the signal peptide. Catalysis depends on charge relay system residues H117, D147, and S220. Residues 218–220 (GNS) and 275–279 (LGVVI) each bind substrate. 2 PDZ domains span residues 264-355 (LKKD…IRNG) and 361-468 (DVTI…LRQG). The interval 368-395 (PDDDADIGTGTGADGSAERSSNRLGVSV) is disordered.

It belongs to the peptidase S1C family.

It is found in the periplasm. The catalysed reaction is Acts on substrates that are at least partially unfolded. The cleavage site P1 residue is normally between a pair of hydrophobic residues, such as Val-|-Val.. Functionally, might be efficient in the degradation of transiently denatured and unfolded proteins which accumulate in the periplasm following stress conditions. The chain is Probable periplasmic serine endoprotease DegP-like from Pseudomonas putida (strain W619).